A 181-amino-acid chain; its full sequence is Alkyl hydroperoxide reductase AhpD (181 aa).

Residue Cys131 is the Proton donor of the active site. An intrachain disulfide couples Cys131 to Cys134. Catalysis depends on Cys134, which acts as the Cysteine sulfenic acid (-SOH) intermediate.

It belongs to the AhpD family.

It carries out the reaction N(6)-[(R)-dihydrolipoyl]-L-lysyl-[lipoyl-carrier protein] + a hydroperoxide = N(6)-[(R)-lipoyl]-L-lysyl-[lipoyl-carrier protein] + an alcohol + H2O. Antioxidant protein with alkyl hydroperoxidase activity. Required for the reduction of the AhpC active site cysteine residues and for the regeneration of the AhpC enzyme activity. In Azorhizobium caulinodans (strain ATCC 43989 / DSM 5975 / JCM 20966 / LMG 6465 / NBRC 14845 / NCIMB 13405 / ORS 571), this protein is Alkyl hydroperoxide reductase AhpD.